The primary structure comprises 360 residues: Arginase, non-hepatic 2 (360 aa).

Mn(2+) contacts are provided by His-122, Asp-145, His-147, and Asp-149. Substrate-binding positions include 147 to 151 (HADIN), 158 to 160 (SGN), and Asp-204. 2 residues coordinate Mn(2+): Asp-253 and Asp-255. Residues Thr-267 and Glu-298 each coordinate substrate.

The protein belongs to the arginase family. As to quaternary structure, homotrimer. Requires Mn(2+) as cofactor. In terms of tissue distribution, expressed at differing tadpole stages in tail, intestine, hindlimb and trunk region. Strongest in tadpole tail.

The catalysed reaction is L-arginine + H2O = urea + L-ornithine. The protein operates within nitrogen metabolism; urea cycle; L-ornithine and urea from L-arginine: step 1/1. Its function is as follows. As well as its role in the urea cycle, may be involved in tissue remodeling. The polypeptide is Arginase, non-hepatic 2 (arg2-b) (Xenopus laevis (African clawed frog)).